Here is a 323-residue protein sequence, read N- to C-terminus: Protein translocase subunit SecF (323 aa).

The next 6 helical transmembrane spans lie at 19 to 39 (GVIV…FKGF), 138 to 158 (ILSL…RYEW), 162 to 182 (LASV…VIVF), 189 to 209 (EVIA…IIIF), 244 to 264 (LTVF…IIGF), and 269 to 289 (LIGT…VALL).

Belongs to the SecD/SecF family. SecF subfamily. As to quaternary structure, forms a complex with SecD. Part of the essential Sec protein translocation apparatus which comprises SecA, SecYEG and auxiliary proteins SecDF-YajC and YidC.

The protein localises to the cell inner membrane. Its function is as follows. Part of the Sec protein translocase complex. Interacts with the SecYEG preprotein conducting channel. SecDF uses the proton motive force (PMF) to complete protein translocation after the ATP-dependent function of SecA. This chain is Protein translocase subunit SecF, found in Helicobacter pylori (strain J99 / ATCC 700824) (Campylobacter pylori J99).